The following is a 155-amino-acid chain: MKLQLWTIGKTNDAYLKEGCAQYTKRLPHYLPFEYLEIPEPKNTKLSSDVLKKEEEKLIFDRLQDSDQLILLDEKGNEFTSTEFGQYIQKKMNSVAGNLIFLIGGPYGFSDAVYKRANGKIALSKMTFSHQMVRLFALEQLYRACTIIKGEKYHH.

S-adenosyl-L-methionine contacts are provided by residues leucine 72, glycine 104, and leucine 123–phenylalanine 128.

Belongs to the RNA methyltransferase RlmH family. Homodimer.

It localises to the cytoplasm. It carries out the reaction pseudouridine(1915) in 23S rRNA + S-adenosyl-L-methionine = N(3)-methylpseudouridine(1915) in 23S rRNA + S-adenosyl-L-homocysteine + H(+). Specifically methylates the pseudouridine at position 1915 (m3Psi1915) in 23S rRNA. The sequence is that of Ribosomal RNA large subunit methyltransferase H from Cytophaga hutchinsonii (strain ATCC 33406 / DSM 1761 / CIP 103989 / NBRC 15051 / NCIMB 9469 / D465).